We begin with the raw amino-acid sequence, 320 residues long: o-succinylbenzoate synthase (320 aa).

Residue K133 is the Proton donor of the active site. Residues D161, E190, and D213 each contribute to the Mg(2+) site. K235 serves as the catalytic Proton acceptor.

The protein belongs to the mandelate racemase/muconate lactonizing enzyme family. MenC type 1 subfamily. A divalent metal cation serves as cofactor.

The catalysed reaction is (1R,6R)-6-hydroxy-2-succinyl-cyclohexa-2,4-diene-1-carboxylate = 2-succinylbenzoate + H2O. Its pathway is quinol/quinone metabolism; 1,4-dihydroxy-2-naphthoate biosynthesis; 1,4-dihydroxy-2-naphthoate from chorismate: step 4/7. The protein operates within quinol/quinone metabolism; menaquinone biosynthesis. Its function is as follows. Converts 2-succinyl-6-hydroxy-2,4-cyclohexadiene-1-carboxylate (SHCHC) to 2-succinylbenzoate (OSB). This chain is o-succinylbenzoate synthase, found in Shigella flexneri.